A 316-amino-acid chain; its full sequence is Ornithine carbamoyltransferase (316 aa).

Carbamoyl phosphate-binding positions include 57–60, Gln84, Arg108, and 135–138; these read STRT and HPCQ. Residues Asn166, Asp230, and 234–235 contribute to the L-ornithine site; that span reads SM. Residues 269-270 and Arg297 each bind carbamoyl phosphate; that span reads CL.

The protein belongs to the aspartate/ornithine carbamoyltransferase superfamily. OTCase family.

It is found in the cytoplasm. It carries out the reaction carbamoyl phosphate + L-ornithine = L-citrulline + phosphate + H(+). It participates in amino-acid degradation; L-arginine degradation via ADI pathway; carbamoyl phosphate from L-arginine: step 2/2. Its function is as follows. Reversibly catalyzes the transfer of the carbamoyl group from carbamoyl phosphate (CP) to the N(epsilon) atom of ornithine (ORN) to produce L-citrulline. The chain is Ornithine carbamoyltransferase from Bacillus cereus (strain 03BB102).